The chain runs to 804 residues: Phenylalanine--tRNA ligase beta subunit (804 aa).

The region spanning 38-148 (RAAFRAFTIA…ENAPVGTSFA (111 aa)) is the tRNA-binding domain. Residues 401-476 (HTARVIDFPV…RIHGINRIDP (76 aa)) enclose the B5 domain. Residues D454, D460, E463, and E464 each contribute to the Mg(2+) site. The FDX-ACB domain occupies 710–803 (SLFQSLKRDY…VAKQTGGVLR (94 aa)).

This sequence belongs to the phenylalanyl-tRNA synthetase beta subunit family. Type 1 subfamily. In terms of assembly, tetramer of two alpha and two beta subunits. Mg(2+) serves as cofactor.

Its subcellular location is the cytoplasm. It catalyses the reaction tRNA(Phe) + L-phenylalanine + ATP = L-phenylalanyl-tRNA(Phe) + AMP + diphosphate + H(+). In Brucella melitensis biotype 1 (strain ATCC 23456 / CCUG 17765 / NCTC 10094 / 16M), this protein is Phenylalanine--tRNA ligase beta subunit.